A 45-amino-acid chain; its full sequence is Temporin-SHf (45 aa).

An N-terminal signal peptide occupies residues Phe1–Cys10. The propeptide occupies Glu11–Arg35. The residue at position 43 (Phe43) is a Phenylalanine amide.

The protein belongs to the frog skin active peptide (FSAP) family. Temporin subfamily.

It is found in the secreted. The protein localises to the target cell membrane. In terms of biological role, non-amphipathic alpha-helical antimicrobial peptide with potent activity against some Gram-positive bacteria (including methicillin-resistant Staphylococcus aureus (MRSA)), weak activity against Gram-negative bacteria and no activity against fungi. Permeabilizates membranes through a detergent-like effect probably via the carpet mechanism. More precisely, it strongly and selectively perturbs anionic bilayers membranes by interacting with the polar headgroups and the glycerol backbone region of the phospholipids, hence disrupting the acyl chain packing of the bilayer. Is not active against Leishmania (promastigote and axenic amastigote forms). Does not show hemolytic activity. Does not show toxicity for human THP-1-derived macrophages. The protein is Temporin-SHf of Pelophylax saharicus (Sahara frog).